A 309-amino-acid chain; its full sequence is UDP-N-acetylenolpyruvoylglucosamine reductase (309 aa).

Positions 34–221 (RVGGPAQVLF…TAAREAAQPI (188 aa)) constitute an FAD-binding PCMH-type domain. R179 is a catalytic residue. S228 serves as the catalytic Proton donor. E298 is an active-site residue.

Belongs to the MurB family. The cofactor is FAD.

The protein resides in the cytoplasm. It carries out the reaction UDP-N-acetyl-alpha-D-muramate + NADP(+) = UDP-N-acetyl-3-O-(1-carboxyvinyl)-alpha-D-glucosamine + NADPH + H(+). Its pathway is cell wall biogenesis; peptidoglycan biosynthesis. Functionally, cell wall formation. This is UDP-N-acetylenolpyruvoylglucosamine reductase from Methylorubrum extorquens (strain PA1) (Methylobacterium extorquens).